Here is a 240-residue protein sequence, read N- to C-terminus: Putative S-adenosylmethionine-dependent methyltransferase RcsF (240 aa).

Residues 5-142 enclose the TsaA-like domain; it reads ISPIGHVRSC…YVPYADIVPD (138 aa). S-adenosyl-L-methionine is bound by residues 22–24, 63–64, R91, and 122–125; these read PRQ, HQ, and LDGT.

Belongs to the tRNA methyltransferase O family.

This is Putative S-adenosylmethionine-dependent methyltransferase RcsF (rcsF) from Pseudomonas aeruginosa.